Reading from the N-terminus, the 831-residue chain is Translation initiation factor IF-2 (831 aa).

Positions 1 to 11 (MADEIKKENAP) are enriched in basic and acidic residues. Positions 1–236 (MADEIKKENA…GKHAKKASAL (236 aa)) are disordered. A compositionally biased stretch (low complexity) spans 22–31 (TTVSGTSTTG). Composition is skewed to basic and acidic residues over residues 49–150 (DLER…RYAD) and 157–166 (DNGKLDDYSD). A compositionally biased stretch (basic residues) spans 190 to 200 (RSKNKVVKAKK). The span at 201-225 (GGRDDENGNKNERQSDRRNQKDVKG) shows a compositional bias: basic and acidic residues. Residues 330 to 500 (HRAPVVTIMG…LLQSEVLELT (171 aa)) enclose the tr-type G domain. The interval 339 to 346 (GHVDHGKT) is G1. Residue 339–346 (GHVDHGKT) coordinates GTP. The tract at residues 364–368 (GITQH) is G2. The segment at 386-389 (DTPG) is G3. Residues 386-390 (DTPGH) and 440-443 (NKID) each bind GTP. The tract at residues 440–443 (NKID) is G4. The interval 476-478 (SAK) is G5.

This sequence belongs to the TRAFAC class translation factor GTPase superfamily. Classic translation factor GTPase family. IF-2 subfamily.

The protein localises to the cytoplasm. Functionally, one of the essential components for the initiation of protein synthesis. Protects formylmethionyl-tRNA from spontaneous hydrolysis and promotes its binding to the 30S ribosomal subunits. Also involved in the hydrolysis of GTP during the formation of the 70S ribosomal complex. The protein is Translation initiation factor IF-2 of Histophilus somni (strain 2336) (Haemophilus somnus).